We begin with the raw amino-acid sequence, 147 residues long: MVHLTAEEKSAVTTLWGKVNVDEVGGEALGRLLVVYPWTQRFFDSFGDLSTPDAVMNNPKVKAHGKKVLGAFSDGLTHLDNLKGTFAQLSELHCDKLHVDPENFRLLGNVLVCVLAHHFGKEFTPQVQAAYQKVVAGVANALAHKYH.

Position 2 is an N-acetylvaline (Val2). Positions 3 to 147 (HLTAEEKSAV…VANALAHKYH (145 aa)) constitute a Globin domain. At Thr13 the chain carries Phosphothreonine. At Ser45 the chain carries Phosphoserine. Lys60 is subject to N6-acetyllysine. Residue His64 coordinates heme b. Lys83 carries the N6-acetyllysine modification. His93 provides a ligand contact to heme b. Cys94 carries the S-nitrosocysteine modification. Lys145 is subject to N6-acetyllysine.

It belongs to the globin family. In terms of assembly, heterotetramer of two alpha chains and two beta chains. Red blood cells.

Its function is as follows. Involved in oxygen transport from the lung to the various peripheral tissues. This chain is Hemoglobin subunit beta (HBB), found in Sapajus apella (Brown-capped capuchin).